Here is a 23-residue protein sequence, read N- to C-terminus: Acidic phospholipase A2 CHA-E6b (23 aa).

Belongs to the phospholipase A2 family. Group II subfamily. D49 sub-subfamily. Requires Ca(2+) as cofactor. Post-translationally, contains 7 disulfide bonds. In terms of tissue distribution, expressed by the venom gland.

The protein resides in the secreted. It catalyses the reaction a 1,2-diacyl-sn-glycero-3-phosphocholine + H2O = a 1-acyl-sn-glycero-3-phosphocholine + a fatty acid + H(+). Functionally, snake venom phospholipase A2 (PLA2) that shows high lipolytic (1200 umol/mg/min) and weak ADP-induced platelet aggregation activities. Also shows weak anticoagulant activity (IC(50) of about 1.0 uM). PLA2 catalyzes the calcium-dependent hydrolysis of the 2-acyl groups in 3-sn-phosphoglycerides. This Crotalus horridus (Timber rattlesnake) protein is Acidic phospholipase A2 CHA-E6b.